Reading from the N-terminus, the 256-residue chain is Putative F-box protein At3g51171 (256 aa).

Residues 1 to 44 enclose the F-box domain; it reads MVPLPWELEEDILSRLAAQSLVRFRSVCKRWNYLFDEKSFIKNH.

This is Putative F-box protein At3g51171 from Arabidopsis thaliana (Mouse-ear cress).